The primary structure comprises 222 residues: Cytochrome b6 (222 aa).

The helical transmembrane segment at 39–59 (IFYCLGGITLTCFLIQFATGF) threads the bilayer. Cys42 lines the heme c pocket. Heme b contacts are provided by His93 and His107. 3 consecutive transmembrane segments (helical) span residues 97–117 (ASMM…TGGF), 123–143 (LTWV…VTGY), and 193–213 (LHTF…FLMI). His194 and His209 together coordinate heme b.

The protein belongs to the cytochrome b family. PetB subfamily. In terms of assembly, the 4 large subunits of the cytochrome b6-f complex are cytochrome b6, subunit IV (17 kDa polypeptide, PetD), cytochrome f and the Rieske protein, while the 4 small subunits are PetG, PetL, PetM and PetN. The complex functions as a dimer. It depends on heme b as a cofactor. Requires heme c as cofactor.

The protein resides in the cellular thylakoid membrane. Its function is as follows. Component of the cytochrome b6-f complex, which mediates electron transfer between photosystem II (PSII) and photosystem I (PSI), cyclic electron flow around PSI, and state transitions. This chain is Cytochrome b6, found in Cyanothece sp. (strain PCC 7425 / ATCC 29141).